Here is a 433-residue protein sequence, read N- to C-terminus: MDDDEYAKLIRRMNPPRVVIDNNASDDATVIQVDSVNKHGTLLEVVQVLTDMNLVIKKAYISSDGGWFMDVFKVIDQDGNKIRDTQVLDYIQKRIESNAGWFIPPLRSSVGVMPTDEYTSIELAGTDRPGLLSEVSAVLTDLHCNVVNAEIWTHNTRAAAVIHVTDNSTHSAITDPIRLSTIKELLCNVVRTNSGSRAAKTVFSCSDTHRERRLHQIMFDDRDYEGVKRARTSASRPSVTLMNIEKDYTVVTMRSKDRPKLVFDVVCTLTDMQYVVFHGMVSTEPVEAYQEFYIRHVDGLPINSEAEQERVIQCLEAAIERRASEGLELELSAEDRVGLLSDITRTFRENSLTIVRAEISTREGKAKDTFYVTDVTGNPVESKIVESIRQQIGVSKLKVKKKEKEHCSVLGTSRPSHETTTMGYLLSNIFKPK.

ACT domains are found at residues Val-30–Val-110, Ser-120–Asp-207, Val-250–Gly-326, and Glu-328–Lys-402.

In terms of biological role, may bind amino acids. The polypeptide is ACT domain-containing protein ACR6 (Arabidopsis thaliana (Mouse-ear cress)).